The primary structure comprises 244 residues: Neurogenin-1 (244 aa).

Disordered regions lie at residues 1-27 and 39-82; these read MPAP…SSFL and LAST…ARVR. The segment covering 10–27 has biased composition (low complexity); the sequence is SDLDCSSSNSSSDLSSFL. One can recognise a bHLH domain in the interval 93–145; sequence SRRVKANDRERNRMHNLNAALDALRSVLPSFPDDTKLTKIETLRFAYNYIWAL.

As to quaternary structure, efficient DNA binding requires dimerization with another bHLH protein. In terms of tissue distribution, expression restricted to the embryonic nervous system.

The protein localises to the nucleus. Functionally, acts as a transcriptional regulator. Involved in the initiation of neuronal differentiation. Activates transcription by binding to the E box (5'-CANNTG-3'). Associates with chromatin to enhancer regulatory elements in genes encoding key transcriptional regulators of neurogenesis. The protein is Neurogenin-1 (Neurog1) of Mus musculus (Mouse).